We begin with the raw amino-acid sequence, 665 residues long: SH3 domain-containing kinase-binding protein 1 (665 aa).

SH3 domains follow at residues Met1 to Lys58 and Arg98 to Gly157. Ser156, Ser159, Ser183, and Ser230 each carry phosphoserine. A disordered region spans residues Ser159–Val200. The segment covering Glu177–Gly195 has biased composition (low complexity). Thr254 bears the Phosphothreonine mark. The SH3 3 domain occupies Lys267 to Pro328. 2 disordered regions span residues Pro328–Ser444 and Asp467–Glu610. A compositionally biased stretch (basic and acidic residues) spans Thr355–Leu390. A Phosphoserine modification is found at Ser436. Polar residues predominate over residues Val469–Pro484. The segment covering Pro491–Pro510 has biased composition (low complexity). Residues Ser509, Ser511, and Ser521 each carry the phosphoserine modification. A compositionally biased stretch (basic and acidic residues) spans Glu517–Lys531. Residues Lys535–Lys546 are compositionally biased toward polar residues. Over residues Ala564 to Gly582 the composition is skewed to low complexity. Ser587 carries the phosphoserine modification. Residues Ala602–Ser664 adopt a coiled-coil conformation.

As to quaternary structure, can self-associate and form homotetramers. Interacts with CD2, F-actin capping protein, PIK3R3, GRB2, EGFR, MET, BLNK, MAP3K4, PDCD6IP, SPRY2, ARHGAP17, ARHGAP27, MAGI2, CRK, BCAR1, SOS1, ASAP1, ARAP3, HIP1R, SYNJ2, INPP5D and STAP1. Interacts with E3 ubiquitin-protein ligases CBL and CBLB, but does not interact with CBLC. Two molecules of SH3KBP1 seem to bind through their respective SH3 1 domain to one molecule of CBLB. The interaction with CBL or CBLB and EGFR is increased upon EGF stimulation. The interaction with CBL is attenuated by PDCD6IP. Interacts (via SH3 domains) with ARAP1. The interaction is independent of EGF and does not affect ARAP1 GTPase-activating activity but is involved in regulating ubiquitination and endocytic trafficking of EGFR. ARAP1 competes with CBL for binding to SH3KBP1 and prevents interaction of CBL with SH3KBP1; this is likely to regulate SH3KBP1-mediated internalization of EGFR. Interacts through its proline-rich region with the SH3 domain of endophilins SH3GL1, SH3GL2 and SH3GL3. The SH3KBP1-endophilin complex seems to associate with a complex containing the phosphorylated receptor (EGFR or MET) and phosphorylated CBL. Probably associates with ASAP1 and phosphorylated EGFR. Probably part of a complex consisting of at least SH3KBP1, ASAP1 and ARAP3. Interacts with focal adhesion kinases PTK2/FAK1 and PTK2B/PYK2, probably as a dimer. Interacts with DAB2 and probably associates with chathrin through its interaction with DAB2. Part of a complex consisting of SH3KBP1, DAB2, and clathrin heavy chain. DAB2 and clathrin dissociate from SH3KBP1 following growth factor treatment, enabling interaction with CBL. Interacts with DDN and probably associates with MAGI2 through its interaction with DDN. Interacts with the SH3 domains of SRC tyrosine-protein kinases SRC, LCK, LYN, FGR, FYN and HCK. Interacts with TRADD, BIRC2, TRAF1, TRAF2 and TNFR1, and the association with a TNFR1-associated complex upon stimulation with TNF-alpha seems to be mediated by SRC. Interacts (via SH3 domains) with SHKBP1 (via PXXXPR motifs). Interaction with CBL is abolished in the presence of SHKBP1. Interacts (via SH3 domains) with ZFP36 (via extreme C-terminal region). Interacts with MAP3K4; this interaction enhances the association with ZFP36. (Microbial infection) Interacts (via SH3 domains) with Chikungunya virus non-structural protein 3 (via C-terminus); this interaction plays a role in initiation of viral replication. Monoubiquitinated by CBL and CBLB after EGF stimulation; probably on its C-terminus. As to expression, ubiquitously expressed. Also expressed in some cancer cell lines.

The protein resides in the cytoplasm. It is found in the cytoskeleton. Its subcellular location is the cytoplasmic vesicle membrane. It localises to the synapse. The protein localises to the synaptosome. The protein resides in the cell junction. It is found in the focal adhesion. Functionally, adapter protein involved in regulating diverse signal transduction pathways. Involved in the regulation of endocytosis and lysosomal degradation of ligand-induced receptor tyrosine kinases, including EGFR and MET/hepatocyte growth factor receptor, through an association with CBL and endophilins. The association with CBL, and thus the receptor internalization, may be inhibited by an interaction with PDCD6IP and/or SPRY2. Involved in regulation of ligand-dependent endocytosis of the IgE receptor. Attenuates phosphatidylinositol 3-kinase activity by interaction with its regulatory subunit. May be involved in regulation of cell adhesion; promotes the interaction between TTK2B and PDCD6IP. May be involved in the regulation of cellular stress response via the MAPK pathways through its interaction with MAP3K4. Is involved in modulation of tumor necrosis factor mediated apoptosis. Plays a role in the regulation of cell morphology and cytoskeletal organization. Required in the control of cell shape and migration. Has an essential role in the stimulation of B cell activation. The chain is SH3 domain-containing kinase-binding protein 1 (SH3KBP1) from Homo sapiens (Human).